Here is a 361-residue protein sequence, read N- to C-terminus: Trehalose 6-phosphate phosphatase RA3 (361 aa).

This sequence belongs to the trehalose phosphatase family. A divalent metal cation is required as a cofactor. Expressed in axillary inflorescence meristems.

The catalysed reaction is alpha,alpha-trehalose 6-phosphate + H2O = alpha,alpha-trehalose + phosphate. The protein operates within glycan biosynthesis; trehalose biosynthesis. Functionally, removes the phosphate from trehalose 6-phosphate to produce free trehalose. Is specific for trehalose 6-phosphate. Does not possess activity toward glucose, sucrose or fructose 6-phosphates. Regulates inflorescence branching. Required to establish the correct identity and determinacy of axillary meristems in both male and female inflorescences. May act through a sugar signal that moves into axillary meristems. Acts upstream of RA1. May have a transcriptional regulatory function. The protein is Trehalose 6-phosphate phosphatase RA3 of Zea mays (Maize).